A 99-amino-acid chain; its full sequence is MNVTAYVVLSGILFTIGCVGVLIRRNAIVVFMCVELMLNASNLALVAFARQHGNLDGQIAAFFVMVVAAAEVVVGLAIIMTIFRTRRSASVDDASLLKY.

Transmembrane regions (helical) follow at residues 3 to 23 (VTAY…GVLI), 28 to 48 (IVVF…LVAF), and 59 to 79 (IAAF…LAII).

The protein belongs to the complex I subunit 4L family. As to quaternary structure, NDH-1 is composed of 14 different subunits. Subunits NuoA, H, J, K, L, M, N constitute the membrane sector of the complex.

The protein localises to the cell membrane. The enzyme catalyses a quinone + NADH + 5 H(+)(in) = a quinol + NAD(+) + 4 H(+)(out). Functionally, NDH-1 shuttles electrons from NADH, via FMN and iron-sulfur (Fe-S) centers, to quinones in the respiratory chain. The immediate electron acceptor for the enzyme in this species is believed to be a menaquinone. Couples the redox reaction to proton translocation (for every two electrons transferred, four hydrogen ions are translocated across the cytoplasmic membrane), and thus conserves the redox energy in a proton gradient. The sequence is that of NADH-quinone oxidoreductase subunit K from Nocardioides sp. (strain ATCC BAA-499 / JS614).